A 179-amino-acid chain; its full sequence is Large ribosomal subunit protein uL5 (179 aa).

This sequence belongs to the universal ribosomal protein uL5 family. In terms of assembly, part of the 50S ribosomal subunit; part of the 5S rRNA/L5/L18/L25 subcomplex. Contacts the 5S rRNA and the P site tRNA. Forms a bridge to the 30S subunit in the 70S ribosome.

In terms of biological role, this is one of the proteins that bind and probably mediate the attachment of the 5S RNA into the large ribosomal subunit, where it forms part of the central protuberance. In the 70S ribosome it contacts protein S13 of the 30S subunit (bridge B1b), connecting the 2 subunits; this bridge is implicated in subunit movement. Contacts the P site tRNA; the 5S rRNA and some of its associated proteins might help stabilize positioning of ribosome-bound tRNAs. This chain is Large ribosomal subunit protein uL5, found in Pectobacterium atrosepticum (strain SCRI 1043 / ATCC BAA-672) (Erwinia carotovora subsp. atroseptica).